Here is a 643-residue protein sequence, read N- to C-terminus: Beta-1,3-galactosyltransferase GALT1 (643 aa).

At 1–6 (MKRFYG) the chain is on the cytoplasmic side. Residues 7-23 (GLLVVSMCMFLTVYRYV) form a helical; Signal-anchor for type II membrane protein membrane-spanning segment. Over 24–643 (DLNTPVEKPY…TKRSLCCREW (620 aa)) the chain is Lumenal. Asparagine 45, asparagine 87, asparagine 144, asparagine 162, asparagine 277, asparagine 287, and asparagine 508 each carry an N-linked (GlcNAc...) asparagine glycan. A Galectin domain is found at 171-364 (LKLQIPCGLT…DFRLISILAS (194 aa)).

The protein belongs to the glycosyltransferase 31 family. In terms of assembly, interacts with GMII. Mn(2+) serves as cofactor. In terms of tissue distribution, expressed in stems and siliques.

Its subcellular location is the golgi apparatus membrane. It participates in protein modification; protein glycosylation. In terms of biological role, beta-1,3-galactosyltransferase that transfers galactose from UDP-galactose to substrates with a terminal beta-N-acetylglucosamine (beta-GlcNAc) residue. Involved in the biosynthesis of N-glycans containing Lewis a structures (with the combination of FUT13). The sequence is that of Beta-1,3-galactosyltransferase GALT1 from Arabidopsis thaliana (Mouse-ear cress).